A 387-amino-acid chain; its full sequence is GTPase Obg (387 aa).

One can recognise an Obg domain in the interval 1 to 159; that stretch reads MKFVDEAIIR…RSLKLELLLL (159 aa). An OBG-type G domain is found at 160–333; sequence ADVGLLGMPN…LALKLLDFID (174 aa). Residues 166–173, 191–195, 213–216, 283–286, and 314–316 each bind GTP; these read GMPNAGKS, FTTLV, DIPG, NKAD, and SAY. Residues S173 and T193 each contribute to the Mg(2+) site.

This sequence belongs to the TRAFAC class OBG-HflX-like GTPase superfamily. OBG GTPase family. Monomer. The cofactor is Mg(2+).

It localises to the cytoplasm. Functionally, an essential GTPase which binds GTP, GDP and possibly (p)ppGpp with moderate affinity, with high nucleotide exchange rates and a fairly low GTP hydrolysis rate. Plays a role in control of the cell cycle, stress response, ribosome biogenesis and in those bacteria that undergo differentiation, in morphogenesis control. This is GTPase Obg from Shewanella pealeana (strain ATCC 700345 / ANG-SQ1).